A 300-amino-acid chain; its full sequence is Bis(5'-nucleosyl)-tetraphosphatase, symmetrical (300 aa).

It belongs to the Ap4A hydrolase family.

It carries out the reaction P(1),P(4)-bis(5'-adenosyl) tetraphosphate + H2O = 2 ADP + 2 H(+). In terms of biological role, hydrolyzes diadenosine 5',5'''-P1,P4-tetraphosphate to yield ADP. The protein is Bis(5'-nucleosyl)-tetraphosphatase, symmetrical of Pseudomonas syringae pv. tomato (strain ATCC BAA-871 / DC3000).